A 974-amino-acid polypeptide reads, in one-letter code: Bifunctional glutamine synthetase adenylyltransferase/adenylyl-removing enzyme (974 aa).

Positions 1–464 (MKNAFLKTHL…HYAALFENEQ (464 aa)) are adenylyl removase. The adenylyl transferase stretch occupies residues 468–974 (LEIGNLVFTG…CSIFKQIMKH (507 aa)).

Belongs to the GlnE family. Requires Mg(2+) as cofactor.

It catalyses the reaction [glutamine synthetase]-O(4)-(5'-adenylyl)-L-tyrosine + phosphate = [glutamine synthetase]-L-tyrosine + ADP. The enzyme catalyses [glutamine synthetase]-L-tyrosine + ATP = [glutamine synthetase]-O(4)-(5'-adenylyl)-L-tyrosine + diphosphate. Involved in the regulation of glutamine synthetase GlnA, a key enzyme in the process to assimilate ammonia. When cellular nitrogen levels are high, the C-terminal adenylyl transferase (AT) inactivates GlnA by covalent transfer of an adenylyl group from ATP to specific tyrosine residue of GlnA, thus reducing its activity. Conversely, when nitrogen levels are low, the N-terminal adenylyl removase (AR) activates GlnA by removing the adenylyl group by phosphorolysis, increasing its activity. The regulatory region of GlnE binds the signal transduction protein PII (GlnB) which indicates the nitrogen status of the cell. The chain is Bifunctional glutamine synthetase adenylyltransferase/adenylyl-removing enzyme from Bartonella quintana (strain Toulouse) (Rochalimaea quintana).